A 346-amino-acid polypeptide reads, in one-letter code: UDP-3-O-acylglucosamine N-acyltransferase (346 aa).

His-253 acts as the Proton acceptor in catalysis.

Belongs to the transferase hexapeptide repeat family. LpxD subfamily. Homotrimer.

The catalysed reaction is a UDP-3-O-[(3R)-3-hydroxyacyl]-alpha-D-glucosamine + a (3R)-hydroxyacyl-[ACP] = a UDP-2-N,3-O-bis[(3R)-3-hydroxyacyl]-alpha-D-glucosamine + holo-[ACP] + H(+). It participates in bacterial outer membrane biogenesis; LPS lipid A biosynthesis. Functionally, catalyzes the N-acylation of UDP-3-O-acylglucosamine using 3-hydroxyacyl-ACP as the acyl donor. Is involved in the biosynthesis of lipid A, a phosphorylated glycolipid that anchors the lipopolysaccharide to the outer membrane of the cell. The polypeptide is UDP-3-O-acylglucosamine N-acyltransferase (Rickettsia prowazekii (strain Madrid E)).